The sequence spans 139 residues: Small ribosomal subunit protein uS12 (139 aa).

Residues 1 to 44 (MPTINQLVKKPRTSKVKKSTAPALNKGYNSHKKKATDLASPQKR) are disordered. A compositionally biased stretch (basic residues) spans 9–18 (KKPRTSKVKK). A 3-methylthioaspartic acid modification is found at Asp102.

Belongs to the universal ribosomal protein uS12 family. In terms of assembly, part of the 30S ribosomal subunit. Contacts proteins S8 and S17. May interact with IF1 in the 30S initiation complex.

In terms of biological role, with S4 and S5 plays an important role in translational accuracy. Its function is as follows. Interacts with and stabilizes bases of the 16S rRNA that are involved in tRNA selection in the A site and with the mRNA backbone. Located at the interface of the 30S and 50S subunits, it traverses the body of the 30S subunit contacting proteins on the other side and probably holding the rRNA structure together. The combined cluster of proteins S8, S12 and S17 appears to hold together the shoulder and platform of the 30S subunit. The sequence is that of Small ribosomal subunit protein uS12 from Macrococcus caseolyticus (strain JCSC5402) (Macrococcoides caseolyticum).